We begin with the raw amino-acid sequence, 350 residues long: Alcohol dehydrogenase 1 (350 aa).

Positions 46, 69, 100, 103, 106, 114, and 156 each coordinate Zn(2+). NAD(+) contacts are provided by residues Gly180 to Gly186, Asp204, Lys209, Val271 to Leu273, and Arg343.

The protein belongs to the zinc-containing alcohol dehydrogenase family. As to quaternary structure, homotetramer. Zn(2+) is required as a cofactor.

The protein localises to the cytoplasm. It catalyses the reaction a primary alcohol + NAD(+) = an aldehyde + NADH + H(+). It carries out the reaction a secondary alcohol + NAD(+) = a ketone + NADH + H(+). This is Alcohol dehydrogenase 1 (ADH1) from Candida albicans (Yeast).